The following is a 138-amino-acid chain: MRTLWIMAVLLLGVEGSVIELGKMIFQETGKNPATSYGLYGCNCGPGGRRKPKDATDRCCYVHKCCYKKLTDCDPIKDRYSYSWVNKAIVCGEDNPCLKEMCECDKAVAICFRENLDTYDKKKKINLKLFCKKTSEQC.

A signal peptide spans 1–16 (MRTLWIMAVLLLGVEG). 7 disulfides stabilise this stretch: cysteine 42/cysteine 131, cysteine 44/cysteine 60, cysteine 59/cysteine 111, cysteine 65/cysteine 138, cysteine 66/cysteine 104, cysteine 73/cysteine 97, and cysteine 91/cysteine 102. Positions 121-133 (KKKKINLKLFCKK) are important for membrane-damaging activities in eukaryotes and bacteria; heparin-binding.

As to expression, expressed by the venom gland.

Its subcellular location is the secreted. In terms of biological role, snake venom phospholipase A2 homolog that lacks catalytic activity. It shows myotoxic and weak anticoagulant activities and induces local edema a few hours after injection (5-10 ug) in the hind paw. A model of myotoxic mechanism has been proposed: an apo Lys49-PLA2 is activated by the entrance of a hydrophobic molecule (e.g. fatty acid) at the hydrophobic channel of the protein leading to a reorientation of a monomer. This reorientation causes a transition between 'inactive' to 'active' states, causing alignment of C-terminal and membrane-docking sites (MDoS) side-by-side and putting the membrane-disruption sites (MDiS) in the same plane, exposed to solvent and in a symmetric position for both monomers. The MDoS region stabilizes the toxin on membrane by the interaction of charged residues with phospholipid head groups. Subsequently, the MDiS region destabilizes the membrane with penetration of hydrophobic residues. This insertion causes a disorganization of the membrane, allowing an uncontrolled influx of ions (i.e. calcium and sodium), and eventually triggering irreversible intracellular alterations and cell death. The polypeptide is Basic phospholipase A2 homolog Ts-K49a (Trimeresurus stejnegeri (Chinese green tree viper)).